A 65-amino-acid chain; its full sequence is Protein translocase subunit SecE (65 aa).

Residues M1–L34 lie on the Cytoplasmic side of the membrane. The helical transmembrane segment at V35 to F51 threads the bilayer. Topologically, residues S52–G65 are extracellular.

Belongs to the SecE/SEC61-gamma family. In terms of assembly, component of the Sec protein translocase complex. Heterotrimer consisting of SecY, SecE and SecG subunits. The heterotrimers can form oligomers, although 1 heterotrimer is thought to be able to translocate proteins. Interacts with SecDF, and other proteins may be involved. The channel interacts with SecA via subunit SecY.

Its subcellular location is the cell inner membrane. Essential subunit of the protein translocation channel SecYEG. Clamps together the 2 halves of SecY. May contact the channel plug during translocation. The protein is Protein translocase subunit SecE of Thermotoga maritima (strain ATCC 43589 / DSM 3109 / JCM 10099 / NBRC 100826 / MSB8).